The primary structure comprises 216 residues: Transmembrane emp24 domain-containing protein eca (216 aa).

Positions 1–20 are cleaved as a signal peptide; the sequence is MRDQFISLALILCVLHSACG. Residues 21–182 are Lumenal-facing; that stretch reads LYFHISETER…FRHTSESTNS (162 aa). In terms of domain architecture, GOLD spans 30 to 126; it reads RKCFIEEVPD…QLRVHLDIQV (97 aa). Residues 134 to 164 are a coiled coil; the sequence is AHVAQKEKLTELQLRIRQLLDQVEQITKEQN. A helical membrane pass occupies residues 183–203; it reads RVLWWSLAQTVVLVCMGFWQM. At 204–216 the chain is on the cytoplasmic side; that stretch reads RHLKSFFEAKKLV. The Prevents secretion from ER signature appears at 213–216; it reads KKLV.

The protein belongs to the EMP24/GP25L family.

The protein resides in the endoplasmic reticulum membrane. In terms of biological role, eca and bai are essential, though not redundant, for dorsoventral patterning of the embryo. Specifically required during early embryogenesis for the activity of maternal tkv, while the zygotic tkv is not affected. Involved in Golgi organization. The protein is Transmembrane emp24 domain-containing protein eca of Drosophila melanogaster (Fruit fly).